Consider the following 368-residue polypeptide: Cyclic GMP-AMP synthase-like receptor (368 aa).

ATP contacts are provided by residues Ser60 and 72–74; that span reads EYD. Glu72, Asp74, and Asp190 together coordinate Mg(2+). GTP-binding positions include Asp190 and 229-236; that span reads RASFYRQE. ATP is bound by residues 233–236, Lys254, and 268–272; these read YRQE and SYFIK.

It belongs to the mab-21 family. Requires Mg(2+) as cofactor. It depends on Mn(2+) as a cofactor.

It carries out the reaction GTP + ATP = 3',2'-cGAMP + 2 diphosphate. The enzyme catalyses GTP + ATP = pppA(2'-5')pG + diphosphate. The catalysed reaction is pppA(2'-5')pG = 3',2'-cGAMP + diphosphate. Its activity is regulated as follows. The enzyme activity is specifically activated by double-stranded RNA (dsRNA). Its function is as follows. Nucleotidyltransferase that catalyzes the formation of cyclic GMP-AMP (3',2'-cGAMP) from ATP and GTP and plays a key role in innate immunity. Synthesizes 3',2'-cGAMP in a two-step reaction through production of the linear intermediate pppA(2'-5')pG. Acts as a key sensor of double-stranded RNA (dsRNA), the presence of dsRNA in the cytoplasm being a danger signal that triggers the immune responses. Directly binds dsRNA, activating the nucleotidyltransferase activity, leading to synthesis of 3',2'-cGAMP, a second messenger that binds to and activates Sting, thereby triggering the antiviral immune response via activation of the NF-kappa-B transcription factor Rel (Relish). The chain is Cyclic GMP-AMP synthase-like receptor from Lucilia cuprina (Green bottle fly).